The chain runs to 488 residues: Argininosuccinate lyase (488 aa).

Belongs to the lyase 1 family. Argininosuccinate lyase subfamily.

The protein resides in the cytoplasm. It carries out the reaction 2-(N(omega)-L-arginino)succinate = fumarate + L-arginine. The protein operates within amino-acid biosynthesis; L-arginine biosynthesis; L-arginine from L-ornithine and carbamoyl phosphate: step 3/3. The chain is Argininosuccinate lyase from Corynebacterium jeikeium (strain K411).